The following is a 129-amino-acid chain: Glycine cleavage system H protein (129 aa).

In terms of domain architecture, Lipoyl-binding spans 24 to 106 (TYTVGITEHA…YVGGWIFKIK (83 aa)). N6-lipoyllysine is present on K65.

It belongs to the GcvH family. As to quaternary structure, the glycine cleavage system is composed of four proteins: P, T, L and H. (R)-lipoate serves as cofactor.

In terms of biological role, the glycine cleavage system catalyzes the degradation of glycine. The H protein shuttles the methylamine group of glycine from the P protein to the T protein. The sequence is that of Glycine cleavage system H protein from Salmonella paratyphi B (strain ATCC BAA-1250 / SPB7).